The primary structure comprises 592 residues: Protein phosphatase EYA1 (592 aa).

Disordered regions lie at residues 1–95 (MEMQ…RPYP) and 240–320 (MTSS…PDSD). Residues 8–26 (SPHSRLSGSSESPSGPKLG) are compositionally biased toward low complexity. Residues 28–63 (SHINSNSMTPNGTEVKTEPMSSSETASTTADGSLNN) show a composition bias toward polar residues. 2 stretches are compositionally biased toward low complexity: residues 64–75 (FSGSAIGSSSFS) and 241–253 (TSSN…PSTN). The segment covering 254-287 (ATYQLQEPPSGITSQAVTDPTAEYSTIHSPSTPI) has biased composition (polar residues). Over residues 288–303 (KDSDSDRLRRGSDGKS) the composition is skewed to basic and acidic residues. The active-site Nucleophile is the Asp-328. Residues Asp-328, Asp-330, and Asp-556 each contribute to the Mg(2+) site. Asp-330 serves as the catalytic Proton donor.

This sequence belongs to the HAD-like hydrolase superfamily. EYA family. Probably interacts with SIX2, SIX4 and SIX5. Interacts with H2AX in response to DNA damage. Interacts with SIX3; promotes EYA1 translocation to the nucleus. Mg(2+) serves as cofactor. Sumoylated with SUMO1. In the embryo, highly expressed in kidney with lower levels in brain. Weakly expressed in lung. In the adult, highly expressed in heart and skeletal muscle. Weakly expressed in brain and liver. No expression in eye or kidney.

The protein localises to the cytoplasm. Its subcellular location is the nucleus. The catalysed reaction is O-phospho-L-tyrosyl-[protein] + H2O = L-tyrosyl-[protein] + phosphate. It carries out the reaction O-phospho-L-seryl-[protein] + H2O = L-seryl-[protein] + phosphate. The enzyme catalyses O-phospho-L-threonyl-[protein] + H2O = L-threonyl-[protein] + phosphate. Its function is as follows. Functions both as protein phosphatase and as transcriptional coactivator for SIX1, and probably also for SIX2, SIX4 and SIX5. Tyrosine phosphatase that dephosphorylates 'Tyr-142' of histone H2AX (H2AXY142ph) and promotes efficient DNA repair via the recruitment of DNA repair complexes containing MDC1. 'Tyr-142' phosphorylation of histone H2AX plays a central role in DNA repair and acts as a mark that distinguishes between apoptotic and repair responses to genotoxic stress. Its function as histone phosphatase may contribute to its function in transcription regulation during organogenesis. Also has phosphatase activity with proteins phosphorylated on Ser and Thr residues (in vitro). Required for normal embryonic development of the craniofacial and trunk skeleton, kidneys and ears. Together with SIX1, it plays an important role in hypaxial muscle development; in this it is functionally redundant with EYA2. This chain is Protein phosphatase EYA1 (EYA1), found in Homo sapiens (Human).